A 610-amino-acid chain; its full sequence is Ecto-NOX disulfide-thiol exchanger 2 (610 aa).

The RRM domain maps to 128 to 207 (KTVFVGGLPE…GRLHVDFAQA (80 aa)). 2 coiled-coil regions span residues 293–328 (IQSANSHVRRLVNEKAAHEKDMEEAKEKFKQALSGI) and 381–505 (RREE…KESC).

It belongs to the ENOX family. Cu cation is required as a cofactor. Glycosylated. As to expression, found in the sera of cancer patients with a wide variety of cancers including breast, prostate, lung and ovarian cancers, leukemias, and lymphomas. Not found in the serum of healthy volunteers or patients with disorders other than cancer. Probably shed into serum by cancer cells. Found on the cell borders of renal, kidney and ovarian carcinomas but not on the borders of surrounding non-cancerous stromal cells.

The protein resides in the cell membrane. It is found in the secreted. It localises to the extracellular space. Inhibited by the antitumor sulfonylurea LY181984, the vabilloid capsaicin, and retinoids. Functionally, may be involved in cell growth. Probably acts as a terminal oxidase of plasma electron transport from cytosolic NAD(P)H via hydroquinones to acceptors at the cell surface. Hydroquinone oxidase activity alternates with a protein disulfide-thiol interchange/oxidoreductase activity which may control physical membrane displacements associated with vesicle budding or cell enlargement. The activities oscillate with a period length of 22 minutes and play a role in control of the ultradian cellular biological clock. The polypeptide is Ecto-NOX disulfide-thiol exchanger 2 (ENOX2) (Homo sapiens (Human)).